The sequence spans 423 residues: Glutamate-1-semialdehyde 2,1-aminomutase (423 aa).

K258 is modified (N6-(pyridoxal phosphate)lysine).

Belongs to the class-III pyridoxal-phosphate-dependent aminotransferase family. HemL subfamily. It depends on pyridoxal 5'-phosphate as a cofactor.

The protein resides in the cytoplasm. It carries out the reaction (S)-4-amino-5-oxopentanoate = 5-aminolevulinate. Its pathway is porphyrin-containing compound metabolism; protoporphyrin-IX biosynthesis; 5-aminolevulinate from L-glutamyl-tRNA(Glu): step 2/2. The chain is Glutamate-1-semialdehyde 2,1-aminomutase from Pyrobaculum arsenaticum (strain DSM 13514 / JCM 11321 / PZ6).